The chain runs to 323 residues: Fructokinase-1 (323 aa).

It belongs to the carbohydrate kinase PfkB family. Expressed in stems, at higher levels in roots, and hardly detectable in leaves.

It catalyses the reaction D-fructose + ATP = D-fructose 6-phosphate + ADP + H(+). The protein operates within glycan biosynthesis; starch biosynthesis. Its activity is regulated as follows. Inhibited at high fructose. Its function is as follows. May play an important role in maintaining the flux of carbon towards starch formation in endosperm. May also be involved in a sugar-sensing pathway. The polypeptide is Fructokinase-1 (FRK1) (Zea mays (Maize)).